Reading from the N-terminus, the 232-residue chain is 7-cyano-7-deazaguanine synthase (232 aa).

7-17 (CSGGLDSVSLA) is a binding site for ATP. The Zn(2+) site is built by C185, C193, C196, and C199.

Belongs to the QueC family. The cofactor is Zn(2+).

It carries out the reaction 7-carboxy-7-deazaguanine + NH4(+) + ATP = 7-cyano-7-deazaguanine + ADP + phosphate + H2O + H(+). It functions in the pathway purine metabolism; 7-cyano-7-deazaguanine biosynthesis. In terms of biological role, catalyzes the ATP-dependent conversion of 7-carboxy-7-deazaguanine (CDG) to 7-cyano-7-deazaguanine (preQ(0)). This chain is 7-cyano-7-deazaguanine synthase, found in Brucella abortus (strain S19).